The chain runs to 111 residues: Phosphoribosyl-ATP pyrophosphatase (111 aa).

Belongs to the PRA-PH family.

It localises to the cytoplasm. It catalyses the reaction 1-(5-phospho-beta-D-ribosyl)-ATP + H2O = 1-(5-phospho-beta-D-ribosyl)-5'-AMP + diphosphate + H(+). Its pathway is amino-acid biosynthesis; L-histidine biosynthesis; L-histidine from 5-phospho-alpha-D-ribose 1-diphosphate: step 2/9. The sequence is that of Phosphoribosyl-ATP pyrophosphatase from Pseudomonas entomophila (strain L48).